We begin with the raw amino-acid sequence, 518 residues long: Tyrosine/DOPA decarboxylase 1 (518 aa).

Lys321 bears the N6-(pyridoxal phosphate)lysine mark.

It belongs to the group II decarboxylase family. Homodimer. It depends on pyridoxal 5'-phosphate as a cofactor. In terms of tissue distribution, predominantly expressed in the roots.

The enzyme catalyses L-tyrosine + H(+) = tyramine + CO2. It catalyses the reaction L-dopa + H(+) = dopamine + CO2. The catalysed reaction is 5-hydroxy-L-tryptophan + H(+) = serotonin + CO2. Marginally higher substrate specificity for L-DOPA over L-tyrosine. The sequence is that of Tyrosine/DOPA decarboxylase 1 (TYDC1) from Papaver somniferum (Opium poppy).